We begin with the raw amino-acid sequence, 112 residues long: uncharacterized protein (112 aa).

This is an uncharacterized protein from Methanocaldococcus jannaschii (strain ATCC 43067 / DSM 2661 / JAL-1 / JCM 10045 / NBRC 100440) (Methanococcus jannaschii).